Reading from the N-terminus, the 92-residue chain is PqqA binding protein (92 aa).

The protein belongs to the PqqD family. In terms of assembly, monomer. Interacts with PqqE.

The protein operates within cofactor biosynthesis; pyrroloquinoline quinone biosynthesis. Functions as a PqqA binding protein and presents PqqA to PqqE, in the pyrroloquinoline quinone (PQQ) biosynthetic pathway. In Klebsiella pneumoniae (strain 342), this protein is PqqA binding protein.